Here is a 131-residue protein sequence, read N- to C-terminus: Small ribosomal subunit protein eS8 (131 aa).

The disordered stretch occupies residues M1–Q37. Basic residues predominate over residues S16 to A30.

This sequence belongs to the eukaryotic ribosomal protein eS8 family. In terms of assembly, part of the 30S ribosomal subunit.

The sequence is that of Small ribosomal subunit protein eS8 from Pyrobaculum neutrophilum (strain DSM 2338 / JCM 9278 / NBRC 100436 / V24Sta) (Thermoproteus neutrophilus).